A 429-amino-acid chain; its full sequence is Maltoporin 2 (429 aa).

The N-terminal stretch at 1 to 25 (MMITLRKLPLAVAVAAGVMSAQALA) is a signal peptide. A compositionally biased stretch (polar residues) spans 397 to 412 (GLQTKDSSGSGAFTSS). The segment at 397–416 (GLQTKDSSGSGAFTSSRGDD) is disordered.

It belongs to the porin LamB (TC 1.B.3) family. Homotrimer formed of three 18-stranded antiparallel beta-barrels, containing three independent channels.

The protein localises to the cell outer membrane. The catalysed reaction is beta-maltose(in) = beta-maltose(out). Its function is as follows. Involved in the transport of maltose and maltodextrins. This is Maltoporin 2 from Klebsiella pneumoniae subsp. pneumoniae (strain ATCC 700721 / MGH 78578).